The primary structure comprises 413 residues: Pyruvate dehydrogenase complex subunit homolog DDB_G0271564, mitochondrial (413 aa).

The transit peptide at 1–19 (MNRILKQVSNTKGKGIRFY) directs the protein to the mitochondrion. The Peripheral subunit-binding (PSBD) domain occupies 29-67 (YMFPSVRRLLVEYGINSSKEVTATGPQNRLLKGDVLAYI).

It belongs to the 2-oxoacid dehydrogenase family.

It localises to the mitochondrion. Functionally, the pyruvate dehydrogenase complex catalyzes the overall conversion of pyruvate to acetyl-CoA and CO(2). It contains multiple copies of three enzymatic components: pyruvate dehydrogenase (E1), dihydrolipoamide acetyltransferase (E2) and lipoamide dehydrogenase (E3). This Dictyostelium discoideum (Social amoeba) protein is Pyruvate dehydrogenase complex subunit homolog DDB_G0271564, mitochondrial (pdhX).